Consider the following 447-residue polypeptide: Sporulation protein YpeB (447 aa).

This sequence belongs to the YpeB family.

Required for spore cortex hydrolysis during germination. Appears to be required for either expression, localization, activation or function of SleB. The sequence is that of Sporulation protein YpeB from Halalkalibacterium halodurans (strain ATCC BAA-125 / DSM 18197 / FERM 7344 / JCM 9153 / C-125) (Bacillus halodurans).